We begin with the raw amino-acid sequence, 64 residues long: Large ribosomal subunit protein bL28 (64 aa).

This sequence belongs to the bacterial ribosomal protein bL28 family.

This is Large ribosomal subunit protein bL28 from Syntrophobacter fumaroxidans (strain DSM 10017 / MPOB).